The following is a 712-amino-acid chain: DNA ligase (712 aa).

Positions 1–22 are enriched in low complexity; the sequence is MSTQYDSDSSPAASNSGSADPA. A disordered region spans residues 1–23; it reads MSTQYDSDSSPAASNSGSADPAL. 53–57 contacts NAD(+); the sequence is DAEFD. The interval 69-93 is disordered; that stretch reads SHPEAVTGPSPTTEVAPSPPESSPF. Residues 104-105 and glutamate 129 each bind NAD(+); that span reads SL. The active-site N6-AMP-lysine intermediate is the lysine 131. NAD(+)-binding residues include arginine 152, glutamate 192, lysine 308, and lysine 332. 4 residues coordinate Zn(2+): cysteine 426, cysteine 429, cysteine 445, and cysteine 451. The BRCT domain occupies 624 to 712; that stretch reads IQADLLAGLS…GPGKGDAEED (89 aa).

This sequence belongs to the NAD-dependent DNA ligase family. LigA subfamily. It depends on Mg(2+) as a cofactor. Mn(2+) is required as a cofactor.

The catalysed reaction is NAD(+) + (deoxyribonucleotide)n-3'-hydroxyl + 5'-phospho-(deoxyribonucleotide)m = (deoxyribonucleotide)n+m + AMP + beta-nicotinamide D-nucleotide.. Its function is as follows. DNA ligase that catalyzes the formation of phosphodiester linkages between 5'-phosphoryl and 3'-hydroxyl groups in double-stranded DNA using NAD as a coenzyme and as the energy source for the reaction. It is essential for DNA replication and repair of damaged DNA. The polypeptide is DNA ligase (Corynebacterium urealyticum (strain ATCC 43042 / DSM 7109)).